The sequence spans 430 residues: Pre-B-cell leukemia transcription factor 1 (430 aa).

Residues 1 to 40 (MDEQPRLMHSHAGVGMAGHPGLSQHLQDGAGGTEGEGGRK) are disordered. Positions 38–232 (GRKQDIGDIL…VMILRSRFLD (195 aa)) constitute a PBC domain. Residues 45–124 (DILQQIMTIT…EGVAGPEKGG (80 aa)) form a PBC-A region. The segment at 127-232 (AAAAAAAAAS…VMILRSRFLD (106 aa)) is PBC-B. The segment at residues 233–295 (ARRKRRNFNK…NKRIRYKKNI (63 aa)) is a DNA-binding region (homeobox; TALE-type). Disordered stretches follow at residues 317-338 (SAHG…SSSF) and 395-430 (SPQG…DTSN). Residues 323–338 (ANSPSTPNSAGSSSSF) are compositionally biased toward low complexity. Over residues 407 to 418 (DATTPSSVTSPT) the composition is skewed to polar residues.

The protein belongs to the TALE/PBX homeobox family. In terms of assembly, forms a heterodimer with MEIS1 which binds DNA. The PBX1-MEIS1 heterodimer binds a cAMP-responsive sequence in CYP17. It also binds a consensus region in the SOX3 promoter. PBX1 forms heterotrimers with MEIS1 and a number of HOX proteins including HOXA9, HOXD4, HOXD9 and HOXD10. Forms heterodimers with HOXA1, HOXA5, HOXB7 and HOXB8 which bind the 5'-TGATTGAT-3' consensus sequence. Also forms heterodimers with HOXA5, HOXB7, HOXB8, HOXC8 and HOXD4 which bind the 5'-ATCAATCAA-3' consensus sequence. Interacts with PBXIP1. Interacts with TLX1. Interacts with FOXC1. Interacts with MN1. As to quaternary structure, interacts with MEIS2 isoform 4, SP1, SP3 and KLF4. Part of a PDX1:PBX1b:MEIS2B complex; PBX1b recruits MEIS2B to the complex. In terms of tissue distribution, expressed in the kidney. Expressed in the endothelial cells of the glomeruli and interstitium (at protein level). Expressed in all tissues except in cells of the B and T lineage. Expressed strongly in kidney and brain.

It is found in the nucleus. Functionally, transcription factor which binds the DNA sequence 5'-TGATTGAT-3' as part of a heterodimer with HOX proteins such as HOXA1, HOXA5, HOXB7 and HOXB8. Binds to the DNA sequence 5'-TGATTGAC-3' in complex with a nuclear factor which is not a class I HOX protein. Has also been shown to bind the DNA sequence 5'-ATCAATCAA-3' cooperatively with HOXA5, HOXB7, HOXB8, HOXC8 and HOXD4. Acts as a transcriptional activator of PF4 in complex with MEIS1. Also activates transcription of SOX3 in complex with MEIS1 by binding to the 5'-TGATTGAC-3' consensus sequence. In natural killer cells, binds to the NFIL3 promoter and acts as a transcriptional activator of NFIL3, promoting natural killer cell development. Plays a role in the cAMP-dependent regulation of CYP17A1 gene expression via its cAMP-regulatory sequence (CRS1). Probably in complex with MEIS2, involved in transcriptional regulation by KLF4. Acts as a transcriptional activator of NKX2-5 and a transcriptional repressor of CDKN2B. Together with NKX2-5, required for spleen development through a mechanism that involves CDKN2B repression. As part of a PDX1:PBX1b:MEIS2B complex in pancreatic acinar cells, is involved in the transcriptional activation of the ELA1 enhancer; the complex binds to the enhancer B element and cooperates with the transcription factor 1 complex (PTF1) bound to the enhancer A element. The polypeptide is Pre-B-cell leukemia transcription factor 1 (PBX1) (Homo sapiens (Human)).